The sequence spans 336 residues: Zinc transporter ZIP11 (336 aa).

Helical transmembrane passes span 12–32 (LLGTLLTWGLTAAGSALVFIF), 44–64 (LGFAAGVMLAASYWSLLAPAI), 75–95 (SFAFVPAAVGFLVGAGFVYLA), 188–208 (IMLLILAITIHNIPEGLAVGV), 258–278 (WYGQLSGMVEPIAGLLGTIAI), 280–300 (LAEPLLPYALAFAAGAMVYVV), and 316–336 (LASWTCIFGFIVMMSLDVGLG).

It belongs to the ZIP transporter (TC 2.A.5) family.

It is found in the cell membrane. Its subcellular location is the nucleus. It localises to the cytoplasm. The protein localises to the golgi apparatus. Functionally, functions as a cellular zinc transporter. The polypeptide is Zinc transporter ZIP11 (slc39a11) (Xenopus tropicalis (Western clawed frog)).